The sequence spans 204 residues: Protein GrpE (204 aa).

Over residues 1 to 12 the composition is skewed to basic and acidic residues; that stretch reads MSNQEKKMHEEE. The interval 1–37 is disordered; sequence MSNQEKKMHEEELQQQETVEADTEAEAEAVGTDADIE.

This sequence belongs to the GrpE family. In terms of assembly, homodimer.

The protein resides in the cytoplasm. Participates actively in the response to hyperosmotic and heat shock by preventing the aggregation of stress-denatured proteins, in association with DnaK and GrpE. It is the nucleotide exchange factor for DnaK and may function as a thermosensor. Unfolded proteins bind initially to DnaJ; upon interaction with the DnaJ-bound protein, DnaK hydrolyzes its bound ATP, resulting in the formation of a stable complex. GrpE releases ADP from DnaK; ATP binding to DnaK triggers the release of the substrate protein, thus completing the reaction cycle. Several rounds of ATP-dependent interactions between DnaJ, DnaK and GrpE are required for fully efficient folding. The protein is Protein GrpE of Vibrio proteolyticus (Aeromonas proteolytica).